The chain runs to 336 residues: Cyclin-H1-1 (336 aa).

A2 is modified (N-acetylalanine). The interval 297–336 (KSCLGHSSSHDESKKREKRSKHKSHRSSNDTPNGAPPPIG) is disordered. Residues 312-322 (REKRSKHKSHR) are compositionally biased toward basic residues.

Belongs to the cyclin family. In terms of assembly, interacts with CDKA-1, CDKD-2 and CDKD-3, but not CDKD-1 and CDKF-1.

Its subcellular location is the cytoplasm. The protein localises to the nucleus. In terms of biological role, associates with CDK-2 and CDK-3 and activates the CDK kinases. This is Cyclin-H1-1 (CYCH1-1) from Arabidopsis thaliana (Mouse-ear cress).